The primary structure comprises 172 residues: MKYFNVGKIVNTQGLRGEVRVLSVTDFADERFKKGSQLALFDKKDHFAMTVEIASHRKHKNFDIVKFKGLYHINDVEKYRDFTLKVTEDHLADLEDGEFYYHEIIGLDVYENDILIGQVKEILQPGANDVWVVKRKGKKDLLLPYIPSVILKVDVPNGRIDVTVLEGLDDEN.

The region spanning 96–168 (DGEFYYHEII…RIDVTVLEGL (73 aa)) is the PRC barrel domain.

Belongs to the RimM family. Binds ribosomal protein uS19.

It is found in the cytoplasm. An accessory protein needed during the final step in the assembly of 30S ribosomal subunit, possibly for assembly of the head region. Essential for efficient processing of 16S rRNA. May be needed both before and after RbfA during the maturation of 16S rRNA. It has affinity for free ribosomal 30S subunits but not for 70S ribosomes. The protein is Ribosome maturation factor RimM of Streptococcus mutans serotype c (strain ATCC 700610 / UA159).